The sequence spans 549 residues: Glucose-6-phosphate isomerase (549 aa).

The Proton donor role is filled by E353. Residues H384 and K510 contribute to the active site. The interval 523-549 (AEPPAAQSDSSTDALVRRYRSERGRTA) is disordered. The segment covering 537-549 (LVRRYRSERGRTA) has biased composition (basic and acidic residues).

Belongs to the GPI family.

The protein localises to the cytoplasm. It catalyses the reaction alpha-D-glucose 6-phosphate = beta-D-fructose 6-phosphate. It participates in carbohydrate biosynthesis; gluconeogenesis. It functions in the pathway carbohydrate degradation; glycolysis; D-glyceraldehyde 3-phosphate and glycerone phosphate from D-glucose: step 2/4. In terms of biological role, catalyzes the reversible isomerization of glucose-6-phosphate to fructose-6-phosphate. The chain is Glucose-6-phosphate isomerase from Mycolicibacterium gilvum (strain PYR-GCK) (Mycobacterium gilvum (strain PYR-GCK)).